The chain runs to 122 residues: Large ribosomal subunit protein uL14c (122 aa).

It belongs to the universal ribosomal protein uL14 family. In terms of assembly, part of the 50S ribosomal subunit.

Its subcellular location is the plastid. It is found in the chloroplast. Functionally, binds to 23S rRNA. The protein is Large ribosomal subunit protein uL14c of Piper cenocladum (Ant piper).